Here is a 315-residue protein sequence, read N- to C-terminus: Malate dehydrogenase (315 aa).

NAD(+) is bound at residue 9–15 (GGSGNVG). R84 and R90 together coordinate substrate. NAD(+) is bound by residues N97 and 120–122 (VSN). 2 residues coordinate substrate: N122 and R153. H177 functions as the Proton acceptor in the catalytic mechanism.

The protein belongs to the LDH/MDH superfamily.

The enzyme catalyses (S)-malate + NAD(+) = oxaloacetate + NADH + H(+). Catalyzes the reversible oxidation of malate to oxaloacetate. This Helicobacter hepaticus (strain ATCC 51449 / 3B1) protein is Malate dehydrogenase.